A 78-amino-acid chain; its full sequence is Large ribosomal subunit protein bL28 (78 aa).

Residues 1–29 (MSAHCQVTGRQPSFGKSVSHSHRRTSRRW) are disordered.

The protein belongs to the bacterial ribosomal protein bL28 family.

The sequence is that of Large ribosomal subunit protein bL28 from Corynebacterium efficiens (strain DSM 44549 / YS-314 / AJ 12310 / JCM 11189 / NBRC 100395).